The sequence spans 211 residues: Uracil phosphoribosyltransferase (211 aa).

5-phospho-alpha-D-ribose 1-diphosphate contacts are provided by residues Arg-78, Arg-103, and 130–138; that span reads DPMLATGGT. Residues Ile-195 and 200–202 contribute to the uracil site; that span reads GDA. Asp-201 contributes to the 5-phospho-alpha-D-ribose 1-diphosphate binding site.

This sequence belongs to the UPRTase family. Requires Mg(2+) as cofactor.

The catalysed reaction is UMP + diphosphate = 5-phospho-alpha-D-ribose 1-diphosphate + uracil. It functions in the pathway pyrimidine metabolism; UMP biosynthesis via salvage pathway; UMP from uracil: step 1/1. With respect to regulation, allosterically activated by GTP. In terms of biological role, catalyzes the conversion of uracil and 5-phospho-alpha-D-ribose 1-diphosphate (PRPP) to UMP and diphosphate. In Pseudarthrobacter chlorophenolicus (strain ATCC 700700 / DSM 12829 / CIP 107037 / JCM 12360 / KCTC 9906 / NCIMB 13794 / A6) (Arthrobacter chlorophenolicus), this protein is Uracil phosphoribosyltransferase.